The following is a 429-amino-acid chain: Adenylosuccinate synthetase (429 aa).

Residues 12–18 (GDEGKGK) and 40–42 (GHT) contribute to the GTP site. D13 (proton acceptor) is an active-site residue. Mg(2+) is bound by residues D13 and G40. IMP contacts are provided by residues 13-16 (DEGK), 38-41 (NAGH), T128, R142, Q223, T238, and R302. The Proton donor role is filled by H41. Residue 298-304 (VNTGRKR) participates in substrate binding. GTP contacts are provided by residues R304, 330-332 (KLD), and 412-414 (GVG).

The protein belongs to the adenylosuccinate synthetase family. As to quaternary structure, homodimer. Mg(2+) serves as cofactor.

It is found in the cytoplasm. The enzyme catalyses IMP + L-aspartate + GTP = N(6)-(1,2-dicarboxyethyl)-AMP + GDP + phosphate + 2 H(+). The protein operates within purine metabolism; AMP biosynthesis via de novo pathway; AMP from IMP: step 1/2. Plays an important role in the de novo pathway of purine nucleotide biosynthesis. Catalyzes the first committed step in the biosynthesis of AMP from IMP. The chain is Adenylosuccinate synthetase from Corynebacterium jeikeium (strain K411).